The primary structure comprises 545 residues: Probable target of rapamycin complex 2 subunit BIT2 (545 aa).

Disordered regions lie at residues 1-24 and 78-166; these read MATD…PNIK and DGSN…GTSS. Composition is skewed to polar residues over residues 11–24, 106–130, and 151–166; these read ATSG…PNIK, IGSS…SNSR, and RSGS…GTSS.

Interacts with the target of rapamycin complex 2 (TORC2) subunit TSC11 and the TORC2 effectors SLM1 and SLM2.

This is Probable target of rapamycin complex 2 subunit BIT2 (BIT2) from Saccharomyces cerevisiae (strain ATCC 204508 / S288c) (Baker's yeast).